The primary structure comprises 314 residues: Ribosomal protein L11 methyltransferase (314 aa).

4 residues coordinate S-adenosyl-L-methionine: Thr-161, Gly-182, Asp-204, and Asn-248.

It belongs to the methyltransferase superfamily. PrmA family.

The protein localises to the cytoplasm. It carries out the reaction L-lysyl-[protein] + 3 S-adenosyl-L-methionine = N(6),N(6),N(6)-trimethyl-L-lysyl-[protein] + 3 S-adenosyl-L-homocysteine + 3 H(+). Functionally, methylates ribosomal protein L11. The polypeptide is Ribosomal protein L11 methyltransferase (Listeria monocytogenes serotype 1/2a (strain 10403S)).